Here is a 237-residue protein sequence, read N- to C-terminus: Neural retina-specific leucine zipper protein (237 aa).

Residues lysine 20 and lysine 24 each participate in a glycyl lysine isopeptide (Lys-Gly) (interchain with G-Cter in SUMO) cross-link. Positions 26–64 (EPSEGRSGVPTASLGSTPYSSVPPSPTFSEPGMVGGGEA) are disordered. The tract at residues 30–93 (GRSGVPTASL…SDEVLGLSPD (64 aa)) is minimal transactivation domain (MTD). The basic motif stretch occupies residues 159 to 185 (RLKQRRRTLKNRGYAQACRSKRLQQRR). The bZIP domain occupies 159–222 (RLKQRRRTLK…DLYKARCDRL (64 aa)). The leucine-zipper stretch occupies residues 187-208 (LEAERARLAAQLDALRAEVARL).

Belongs to the bZIP family. In terms of assembly, interacts with FIZ1; this interaction represses transactivation. Interacts (via the leucine-zipper domain) with CRX. Disumoylated at Lys-20. Sumoylation modulates the transcriptional activity of NRL on RHO and NR2E3 promoters, and is required for normal rod differentiation. Post-translationally, phosphorylated. In terms of tissue distribution, expressed in the retina (at protein level).

Its subcellular location is the cytoplasm. The protein resides in the nucleus. Acts as a transcriptional activator which regulates the expression of several rod-specific genes, including RHO and PDE6B. Also functions as a transcriptional coactivator, stimulating transcription mediated by the transcription factor CRX and NR2E3. Binds to the rhodopsin promoter in a sequence-specific manner. This is Neural retina-specific leucine zipper protein (Nrl) from Mus musculus (Mouse).